A 473-amino-acid polypeptide reads, in one-letter code: Chromosomal replication initiator protein DnaA (473 aa).

A domain I, interacts with DnaA modulators region spans residues 1 to 90 (MSSSLWLQCL…KRVTAPKSET (90 aa)). The segment at 91–136 (IAPARTRTAADVAAESSAPAQLQARKPVHNIWRDEEPVAVDLNHRS) is domain II. The segment at 137-353 (NVNPKHKFNN…GALNRVIANA (217 aa)) is domain III, AAA+ region. Positions 181, 183, 184, and 185 each coordinate ATP. The segment at 354-473 (NFTGRPITID…YSNLIRTLSS (120 aa)) is domain IV, binds dsDNA.

Belongs to the DnaA family. In terms of assembly, oligomerizes as a right-handed, spiral filament on DNA at oriC.

It is found in the cytoplasm. Plays an essential role in the initiation and regulation of chromosomal replication. ATP-DnaA binds to the origin of replication (oriC) to initiate formation of the DNA replication initiation complex once per cell cycle. Binds the DnaA box (a 9 base pair repeat at the origin) and separates the double-stranded (ds)DNA. Forms a right-handed helical filament on oriC DNA; dsDNA binds to the exterior of the filament while single-stranded (ss)DNA is stabiized in the filament's interior. The ATP-DnaA-oriC complex binds and stabilizes one strand of the AT-rich DNA unwinding element (DUE), permitting loading of DNA polymerase. After initiation quickly degrades to an ADP-DnaA complex that is not apt for DNA replication. Binds acidic phospholipids. The sequence is that of Chromosomal replication initiator protein DnaA from Vibrio atlanticus (strain LGP32) (Vibrio splendidus (strain Mel32)).